The chain runs to 464 residues: Aspartyl protease 37 (464 aa).

A signal peptide spans 1 to 19 (MNAAVLLLLLALAALPASC). N-linked (GlcNAc...) asparagine glycosylation is present at Asn41. Residues 89–456 (YLVKLGIGTP…NLRRGRVTFV (368 aa)) enclose the Peptidase A1 domain. The active site involves Asp107. Cysteines 117 and 123 form a disulfide. Asn174 and Asn261 each carry an N-linked (GlcNAc...) asparagine glycan. Residues 299–311 (TTTTTATATATAP) are compositionally biased toward low complexity. A disordered region spans residues 299-319 (TTTTTATATATAPAPAPTPSP). A glycan (N-linked (GlcNAc...) asparagine) is linked at Asn320. Asp337 is an active-site residue. Cysteines 376 and 420 form a disulfide.

Belongs to the peptidase A1 family.

In terms of biological role, anther-specific aspartic protease involved in tapetal programmed cell death (PCD). Directly regulated by the transcription factor EAT1/DTD in anthers during tapetum PCD and degeneration. This chain is Aspartyl protease 37, found in Oryza sativa subsp. japonica (Rice).